We begin with the raw amino-acid sequence, 618 residues long: Grainyhead-like protein 1 homolog (618 aa).

The segment at 1–91 is transcription activation; sequence MTQEYDNKRP…EVEHPEPDHS (91 aa). The segment covering 74–92 has biased composition (basic and acidic residues); sequence RRSSTAKPEVEHPEPDHSK. Residues 74-94 are disordered; the sequence is RRSSTAKPEVEHPEPDHSKRN. Position 208 is a phosphothreonine (T208). The Grh/CP2 DB domain maps to 248–474; sequence SGNNFEYTLE…DLDTQPVLFI (227 aa). Interaction with DNA regions lie at residues 380-389 and 427-430; these read TDFSSQKGVK and RKIR.

This sequence belongs to the grh/CP2 family. Grainyhead subfamily. Binds DNA as homodimer. Homodimer, also forms heterodimers with GRHL2 or GRHL3. In terms of processing, methylation at Arg-9 and Lys-116 may be involved in regulating transcriptional activation. In terms of tissue distribution, isoform 1 is highly expressed in brain, pancreas, tonsil, placenta and kidney. Isoform 2 is highly expressed in brain and liver. Expressed at very low levels in non-steroidogenic cells.

Its subcellular location is the nucleus. Functionally, transcription factor involved in epithelial development. Binds directly to the consensus DNA sequence 5'-AACCGGTT-3'. Important regulator of DSG1 in the context of hair anchorage and epidermal differentiation, participates in the maintenance of the skin barrier. There is no genetic interaction with GRHL3, nor functional cooperativity due to diverse target gene selectivity during epithelia development. May play a role in regulating glucose homeostasis and insulin signaling. In terms of biological role, functions as a transcription activator. May function as a repressor in tissues where both isoform 1 and isoform 2 are expressed. This chain is Grainyhead-like protein 1 homolog, found in Homo sapiens (Human).